The chain runs to 154 residues: Small ribosomal subunit protein bS6 (154 aa).

Residues 97–154 (DSEPSAMMQKRDRDDRKDRERGRRRDDEGFGGGGGFGGDRGDRGDRGDRGERSFGGEG) form a disordered region. 2 stretches are compositionally biased toward basic and acidic residues: residues 105–124 (QKRDRDDRKDRERGRRRDDE) and 135–154 (DRGDRGDRGDRGERSFGGEG).

It belongs to the bacterial ribosomal protein bS6 family.

Binds together with bS18 to 16S ribosomal RNA. The polypeptide is Small ribosomal subunit protein bS6 (Methylobacterium radiotolerans (strain ATCC 27329 / DSM 1819 / JCM 2831 / NBRC 15690 / NCIMB 10815 / 0-1)).